Consider the following 453-residue polypeptide: Potassium/proton antiporter CemA (453 aa).

The next 4 membrane-spanning stretches (helical) occupy residues 235-255 (YMAC…IIFL), 328-348 (ICTI…ACLL), 378-398 (ILLL…EIII), and 414-434 (VSCF…YWIF).

The protein belongs to the CemA family.

It localises to the plastid. Its subcellular location is the chloroplast inner membrane. It carries out the reaction K(+)(in) + H(+)(out) = K(+)(out) + H(+)(in). Functionally, contributes to K(+)/H(+) antiport activity by supporting proton efflux to control proton extrusion and homeostasis in chloroplasts in a light-dependent manner to modulate photosynthesis. Prevents excessive induction of non-photochemical quenching (NPQ) under continuous-light conditions. Indirectly promotes efficient inorganic carbon uptake into chloroplasts. In Zygnema circumcarinatum (Green alga), this protein is Potassium/proton antiporter CemA.